The primary structure comprises 460 residues: Notoamide biosynthesis cluster transcriptional coactivator notR (460 aa).

Positions 74–145 (LQDLARQVEI…EPMPNYVSHT (72 aa)) constitute an HTH iclR-type domain. The H-T-H motif DNA-binding region spans 107–126 (IQDLADLAGVPDIQLRRVIR). The interval 300–320 (TRDFTPQPESSPRPGSASSRV) is disordered.

The protein localises to the nucleus. Its function is as follows. Transcription factor that probably regulates the expression of the gene cluster that mediates the biosynthesis of notoamide, a fungal indole alkaloid that belongs to a family of natural products containing a characteristic bicyclo[2.2.2]diazaoctane core. In Aspergillus sp. (strain MF297-2), this protein is Notoamide biosynthesis cluster transcriptional coactivator notR.